Reading from the N-terminus, the 464-residue chain is MNKGRVTQIMGPVVDVKFDGGKLPEIYNALRIKKDEVNLTLEVALHLGDDTVRTVAMSSTDGLVRGTEVEDTGRPISVPVGDATLGRVFNVLGEAIDLDGEIPADVRRDPIHRQAPAFEELSTKVEILETGIKVVDLLAPYIKGGKIGLFGGAGVGKTVLIQELINNIAQEHGGISVFAGVGERTREGNDLYHEMSDSGVIKKTAMVFGQMNEPPGARQRVALTGLTMAEHFRDEQGQDVLLFIDNIFRFTQAGSEVSALLGRMPSAVGYQPTLATEMGQLQERITSTNKGSITSIQAVYVPADDYTDPAPATTFAHLDATTNLERRLTQMGIYPAVDPLASTSRALSPEIVGEEHYEVARQVQQTLQRYKELQDIIAILGMDELSEEDKLVVHRARRIQFFLSQNFHVAEQFTGQPGSYVPVKETVRGFKEILEGKHDDLPEDAFRLVGGIEEVVENAKKMMA.

G151 to T158 provides a ligand contact to ATP.

The protein belongs to the ATPase alpha/beta chains family. In terms of assembly, F-type ATPases have 2 components, CF(1) - the catalytic core - and CF(0) - the membrane proton channel. CF(1) has five subunits: alpha(3), beta(3), gamma(1), delta(1), epsilon(1). CF(0) has three main subunits: a(1), b(2) and c(9-12). The alpha and beta chains form an alternating ring which encloses part of the gamma chain. CF(1) is attached to CF(0) by a central stalk formed by the gamma and epsilon chains, while a peripheral stalk is formed by the delta and b chains.

It is found in the cell membrane. The catalysed reaction is ATP + H2O + 4 H(+)(in) = ADP + phosphate + 5 H(+)(out). Its function is as follows. Produces ATP from ADP in the presence of a proton gradient across the membrane. The catalytic sites are hosted primarily by the beta subunits. This Bacillus cytotoxicus (strain DSM 22905 / CIP 110041 / 391-98 / NVH 391-98) protein is ATP synthase subunit beta.